A 382-amino-acid chain; its full sequence is D-galactonate dehydratase (382 aa).

Asp183 is a binding site for Mg(2+). His185 (proton donor) is an active-site residue. Mg(2+) contacts are provided by Glu209 and Glu235. Residue His285 is the Proton acceptor of the active site. Residues Asn361–Trp382 form a disordered region.

It belongs to the mandelate racemase/muconate lactonizing enzyme family. GalD subfamily. Mg(2+) is required as a cofactor.

It carries out the reaction D-galactonate = 2-dehydro-3-deoxy-D-galactonate + H2O. It participates in carbohydrate acid metabolism; D-galactonate degradation; D-glyceraldehyde 3-phosphate and pyruvate from D-galactonate: step 1/3. In terms of biological role, catalyzes the dehydration of D-galactonate to 2-keto-3-deoxy-D-galactonate. The chain is D-galactonate dehydratase from Xanthomonas oryzae pv. oryzae (strain MAFF 311018).